The sequence spans 588 residues: Polyamine deacetylase HDAC10 (588 aa).

Residues 1 to 302 (MGTALVYHED…AGGRICAVLE (302 aa)) form a histone deacetylase region. The active site involves His-135.

It belongs to the histone deacetylase family. HD type 2 subfamily. In terms of assembly, interacts with HDAC3. Interacts with HDAC2 and NCOR2/SMRT. Interacts with HSPA8/HSC70. Interacts with MSH2.

It localises to the cytoplasm. The protein resides in the nucleus. It catalyses the reaction N(8)-acetylspermidine + H2O = spermidine + acetate. The catalysed reaction is N-acetylputrescine + H2O = putrescine + acetate. It carries out the reaction N-acetylcadaverine + H2O = cadaverine + acetate. The enzyme catalyses N(6)-acetyl-L-lysyl-[protein] + H2O = L-lysyl-[protein] + acetate. Functionally, polyamine deacetylase (PDAC), which acts preferentially on N(8)-acetylspermidine, and also on acetylcadaverine and acetylputrescine. Exhibits attenuated catalytic activity toward N(1),N(8)-diacetylspermidine and very low activity, if any, toward N(1)-acetylspermidine. Histone deacetylase activity has been observed in vitro. Has also been shown to be involved in MSH2 deacetylation. The physiological relevance of protein/histone deacetylase activity is unclear and could be very weak. May play a role in the promotion of late stages of autophagy, possibly autophagosome-lysosome fusion and/or lysosomal exocytosis in neuroblastoma cells. May play a role in homologous recombination. May promote DNA mismatch repair. The protein is Polyamine deacetylase HDAC10 (Hdac10) of Rattus norvegicus (Rat).